The chain runs to 3420 residues: Adhesin BmaC autotransporter (3420 aa).

The first 72 residues, 1 to 72, serve as a signal peptide directing secretion; that stretch reads MPNLANQDFT…SLVMAGTAAA (72 aa). The region spanning 3138 to 3420 is the Autotransporter domain; sequence GPSGNNGIWA…AGSVGLRVRW (283 aa).

It is found in the cell surface. The protein localises to the cell outer membrane. Its function is as follows. Fibronectin-binding protein, which is involved in adhesion to host cells and in the infective process. Mediates the binding of B.suis to the extracellular matrix and to non-phagocytic cells via cell-associated fibronectin. The polypeptide is Adhesin BmaC autotransporter (Brucella suis biovar 1 (strain 1330)).